A 179-amino-acid chain; its full sequence is Acireductone dioxygenase (179 aa).

Positions 7-26 are disordered; the sequence is MDDAPGDPRQPHRPDPGRPV. 4 residues coordinate Fe(2+): histidine 88, histidine 90, glutamate 94, and histidine 133. 4 residues coordinate Ni(2+): histidine 88, histidine 90, glutamate 94, and histidine 133.

It belongs to the acireductone dioxygenase (ARD) family. Monomer. Interacts with MMP14. Fe(2+) is required as a cofactor. The cofactor is Ni(2+). In terms of tissue distribution, detected in heart, colon, lung, stomach, brain, spleen, liver, skeletal muscle and kidney.

It is found in the cytoplasm. The protein resides in the nucleus. The protein localises to the cell membrane. The catalysed reaction is 1,2-dihydroxy-5-(methylsulfanyl)pent-1-en-3-one + O2 = 4-methylsulfanyl-2-oxobutanoate + formate + 2 H(+). It catalyses the reaction 1,2-dihydroxy-5-(methylsulfanyl)pent-1-en-3-one + O2 = 3-(methylsulfanyl)propanoate + CO + formate + 2 H(+). It functions in the pathway amino-acid biosynthesis; L-methionine biosynthesis via salvage pathway; L-methionine from S-methyl-5-thio-alpha-D-ribose 1-phosphate: step 5/6. Functionally, catalyzes 2 different reactions between oxygen and the acireductone 1,2-dihydroxy-3-keto-5-methylthiopentene (DHK-MTPene) depending upon the metal bound in the active site. Fe-containing acireductone dioxygenase (Fe-ARD) produces formate and 2-keto-4-methylthiobutyrate (KMTB), the alpha-ketoacid precursor of methionine in the methionine recycle pathway. Ni-containing acireductone dioxygenase (Ni-ARD) produces methylthiopropionate, carbon monoxide and formate, and does not lie on the methionine recycle pathway. Also down-regulates cell migration mediated by MMP14. Necessary for hepatitis C virus replication in an otherwise non-permissive cell line. The sequence is that of Acireductone dioxygenase from Homo sapiens (Human).